A 475-amino-acid polypeptide reads, in one-letter code: GlcNAc-binding protein A (475 aa).

Residues 1–27 (MPKLTQLSLVTLALTAGSTLVSQTASA) form the signal peptide. In terms of domain architecture, Chitin-binding type-4 spans 28–195 (HGYVVSPESR…SFYNAIDVNF (168 aa)). In terms of domain architecture, Chitin-binding type-3 spans 426–468 (AGTKVLQPKTGKVYQCKPWPYNGYCVQWSPTATGFEPGIGNSW).

The protein belongs to the GbpA family.

Its subcellular location is the secreted. Functionally, probably interacts with GlcNAc residues. May promote attachment to both epithelial cell surfaces and chitin. The chain is GlcNAc-binding protein A from Shewanella oneidensis (strain ATCC 700550 / JCM 31522 / CIP 106686 / LMG 19005 / NCIMB 14063 / MR-1).